Reading from the N-terminus, the 314-residue chain is Olfactory receptor 5D13 (314 aa).

Residues 1-27 (MMASERNQSSTPTFILLGFSEYPEIQV) are Extracellular-facing. Asn-7 is a glycosylation site (N-linked (GlcNAc...) asparagine). The helical transmembrane segment at 28–48 (PLFLVFLFVYTVTVVGNLGMI) threads the bilayer. Over 49 to 56 (IIIRLNSK) the chain is Cytoplasmic. A helical membrane pass occupies residues 57–77 (LHTIMCFFLSHLSLTDFCFST). Over 78–101 (VVTPKLLENLVVEYRTISFSGCIM) the chain is Extracellular. A helical transmembrane segment spans residues 102-122 (QFCFACIFGVTETFMLAAMAY). At 123 to 141 (DRFVAVCKPLLYTTIMSQK) the chain is on the cytoplasmic side. A helical transmembrane segment spans residues 142–162 (LCALLVAGSYTWGIVCSLILT). Over 163 to 198 (YFLLDLSFCESTFINNFICDHSVIVSASYSDPYISQ) the chain is Extracellular. A helical transmembrane segment spans residues 199 to 219 (RLCFIIAIFNEVSSLIIILTS). Residues 220–239 (YMLIFTTIMKMRSASGRQKT) lie on the Cytoplasmic side of the membrane. The helical transmembrane segment at 240-260 (FSTCASHLTAITIFHGTILFL) threads the bilayer. Residues 261-273 (YCVPNPKTSSLIV) lie on the Extracellular side of the membrane. A helical transmembrane segment spans residues 274–294 (TVASVFYTVAIPMLNPLIYSL). Over 295–314 (RNKDINNMFEKLVVTKLIYH) the chain is Cytoplasmic.

This sequence belongs to the G-protein coupled receptor 1 family.

The protein resides in the cell membrane. Functionally, odorant receptor. In Homo sapiens (Human), this protein is Olfactory receptor 5D13 (OR5D13).